The primary structure comprises 159 residues: Ribosomal RNA large subunit methyltransferase H (159 aa).

S-adenosyl-L-methionine-binding positions include Gly108 and 127–132; that span reads FSKMTF.

Belongs to the RNA methyltransferase RlmH family. In terms of assembly, homodimer.

It is found in the cytoplasm. The catalysed reaction is pseudouridine(1915) in 23S rRNA + S-adenosyl-L-methionine = N(3)-methylpseudouridine(1915) in 23S rRNA + S-adenosyl-L-homocysteine + H(+). Functionally, specifically methylates the pseudouridine at position 1915 (m3Psi1915) in 23S rRNA. The chain is Ribosomal RNA large subunit methyltransferase H from Clostridium perfringens (strain ATCC 13124 / DSM 756 / JCM 1290 / NCIMB 6125 / NCTC 8237 / Type A).